We begin with the raw amino-acid sequence, 379 residues long: Cytochrome b (379 aa).

4 helical membrane passes run 33–53 (FGSLLGMCLIIQILTGLFLAM), 77–98 (WLIRYLHANGASMFFICLFIHV), 113–133 (WNIGIILFLTTMATAFVGYVL), and 178–198 (FFAFHFILPFIIAAFALVHLL). Heme b is bound by residues His83 and His97. Residues His182 and His196 each coordinate heme b. His201 contacts a ubiquinone. The next 4 helical transmembrane spans lie at 226–246 (TKDLLGIFLLLLVLMILVLFF), 288–308 (LGGVLALVLSILILAAFPLLN), 320–340 (VTQVIYWIFIANLLVLTWIGG), and 347–367 (FTTIGQIASITYFAIIIILIP).

This sequence belongs to the cytochrome b family. As to quaternary structure, the cytochrome bc1 complex contains 11 subunits: 3 respiratory subunits (MT-CYB, CYC1 and UQCRFS1), 2 core proteins (UQCRC1 and UQCRC2) and 6 low-molecular weight proteins (UQCRH/QCR6, UQCRB/QCR7, UQCRQ/QCR8, UQCR10/QCR9, UQCR11/QCR10 and a cleavage product of UQCRFS1). This cytochrome bc1 complex then forms a dimer. Heme b is required as a cofactor.

It localises to the mitochondrion inner membrane. In terms of biological role, component of the ubiquinol-cytochrome c reductase complex (complex III or cytochrome b-c1 complex) that is part of the mitochondrial respiratory chain. The b-c1 complex mediates electron transfer from ubiquinol to cytochrome c. Contributes to the generation of a proton gradient across the mitochondrial membrane that is then used for ATP synthesis. In Akodon cursor (Cursor grass mouse), this protein is Cytochrome b (MT-CYB).